Reading from the N-terminus, the 228-residue chain is MIGIIGAMEEEVTILKNKLTQLSEISVAHVKFYTGILKDREVVITQSGIGKVNAAISTTLLINKFKPDIIINTGSAGALDESLNVGDVLISDDVKYHDADATAFGYEYGQVPQMPVAFQSSKPLIEKVSQVVQQQQLTAKVGLIVSGDSFIGSVEQRQKIKKAFPNAMAVEMEATAIAQTCYQFNVPFVVVRAVSDLANGEAEMSFEAFLEKAAVSSSQTVEALVSQL.

E11 acts as the Proton acceptor in catalysis. Residues G77, I151, and 172–173 (ME) contribute to the substrate site. The active-site Proton donor is the D196.

The protein belongs to the PNP/UDP phosphorylase family. MtnN subfamily.

The enzyme catalyses S-adenosyl-L-homocysteine + H2O = S-(5-deoxy-D-ribos-5-yl)-L-homocysteine + adenine. It catalyses the reaction S-methyl-5'-thioadenosine + H2O = 5-(methylsulfanyl)-D-ribose + adenine. It carries out the reaction 5'-deoxyadenosine + H2O = 5-deoxy-D-ribose + adenine. It functions in the pathway amino-acid biosynthesis; L-methionine biosynthesis via salvage pathway; S-methyl-5-thio-alpha-D-ribose 1-phosphate from S-methyl-5'-thioadenosine (hydrolase route): step 1/2. In terms of biological role, catalyzes the irreversible cleavage of the glycosidic bond in both 5'-methylthioadenosine (MTA) and S-adenosylhomocysteine (SAH/AdoHcy) to adenine and the corresponding thioribose, 5'-methylthioribose and S-ribosylhomocysteine, respectively. Also cleaves 5'-deoxyadenosine, a toxic by-product of radical S-adenosylmethionine (SAM) enzymes, into 5-deoxyribose and adenine. The protein is 5'-methylthioadenosine/S-adenosylhomocysteine nucleosidase of Staphylococcus aureus (strain MRSA252).